We begin with the raw amino-acid sequence, 146 residues long: Phospholipase A2 147 (146 aa).

The signal sequence occupies residues 1 to 19 (MYPAHLLVLLAVCVSLLGA). Positions 20–27 (ASVPPQPL) are excised as a propeptide. 7 cysteine pairs are disulfide-bonded: cysteine 38-cysteine 98, cysteine 54-cysteine 145, cysteine 56-cysteine 72, cysteine 71-cysteine 126, cysteine 78-cysteine 119, cysteine 87-cysteine 112, and cysteine 105-cysteine 117. Tyrosine 55, glycine 57, and glycine 59 together coordinate Ca(2+). Residue histidine 75 is part of the active site. Aspartate 76 provides a ligand contact to Ca(2+). The active site involves aspartate 120.

Belongs to the phospholipase A2 family. Group I subfamily. D49 sub-subfamily. Requires Ca(2+) as cofactor. In terms of tissue distribution, expressed by the venom gland.

It is found in the secreted. It catalyses the reaction a 1,2-diacyl-sn-glycero-3-phosphocholine + H2O = a 1-acyl-sn-glycero-3-phosphocholine + a fatty acid + H(+). In terms of biological role, snake venom phospholipase A2 (PLA2) that inhibits collagen-induced platelet aggregation. PLA2 catalyzes the calcium-dependent hydrolysis of the 2-acyl groups in 3-sn-phosphoglycerides. The chain is Phospholipase A2 147 from Drysdalia coronoides (White-lipped snake).